Here is a 177-residue protein sequence, read N- to C-terminus: Large ribosomal subunit protein uL10 (177 aa).

Belongs to the universal ribosomal protein uL10 family. Part of the ribosomal stalk of the 50S ribosomal subunit. The N-terminus interacts with L11 and the large rRNA to form the base of the stalk. The C-terminus forms an elongated spine to which L12 dimers bind in a sequential fashion forming a multimeric L10(L12)X complex.

Forms part of the ribosomal stalk, playing a central role in the interaction of the ribosome with GTP-bound translation factors. The polypeptide is Large ribosomal subunit protein uL10 (Variovorax paradoxus (strain S110)).